The chain runs to 497 residues: Glucose-6-phosphate isomerase (497 aa).

The Proton donor role is filled by E350. Catalysis depends on residues H381 and K485.

Belongs to the GPI family.

It is found in the cytoplasm. It carries out the reaction alpha-D-glucose 6-phosphate = beta-D-fructose 6-phosphate. The protein operates within carbohydrate biosynthesis; gluconeogenesis. It functions in the pathway carbohydrate degradation; glycolysis; D-glyceraldehyde 3-phosphate and glycerone phosphate from D-glucose: step 2/4. Catalyzes the reversible isomerization of glucose-6-phosphate to fructose-6-phosphate. In Legionella pneumophila, this protein is Glucose-6-phosphate isomerase.